A 335-amino-acid chain; its full sequence is N-acetylmuramoyl-L-alanine amidase sle1 (335 aa).

The N-terminal stretch at 1-25 (MQKKVIAAIIGTSAISAVAATQANA) is a signal peptide. In terms of domain architecture, LysM 1 spans 27-70 (TTHTVKPGESVWAISNKYGISIAKLKSLNNLTSNLIFPNQVLKV). Over residues 71–86 (SGSSNSTSNSSRPSTN) the composition is skewed to low complexity. Positions 71-90 (SGSSNSTSNSSRPSTNSGGG) are disordered. LysM domains follow at residues 91–134 (SYYT…KLKV) and 158–201 (SYYT…KLKV). Residues 211-335 (ASATTTNRGY…YQVNNYRYIH (125 aa)) form the Peptidase C51 domain.

The protein localises to the secreted. It is found in the cell surface. It catalyses the reaction Hydrolyzes the link between N-acetylmuramoyl residues and L-amino acid residues in certain cell-wall glycopeptides.. Its function is as follows. Peptidoglycan hydrolase involved in the splitting of the septum during cell division. In Staphylococcus aureus (strain bovine RF122 / ET3-1), this protein is N-acetylmuramoyl-L-alanine amidase sle1 (sle1).